The chain runs to 61 residues: Metallothionein-1C (61 aa).

The tract at residues 1-29 is beta; sequence MDPNCSCSTGGSCSCAGSCTCKACRCTSC. A divalent metal cation is bound by residues Cys5, Cys7, Cys13, Cys15, Cys19, Cys21, Cys24, Cys26, Cys29, Cys33, Cys34, Cys36, Cys37, Cys41, Cys44, Cys48, Cys50, Cys57, Cys59, and Cys60. Residues 30 to 61 form an alpha region; that stretch reads KKSCCSCCPAGCARCAQGCICKGASDKCSCCA.

It belongs to the metallothionein superfamily. Type 1 family. In terms of assembly, monomer.

In terms of biological role, metallothioneins have a high content of cysteine residues that bind various heavy metals; these proteins are transcriptionally regulated by both heavy metals and glucocorticoids. The protein is Metallothionein-1C (MT1C) of Sus scrofa (Pig).